A 340-amino-acid chain; its full sequence is MATGKTSSAANLFTGSTRFDLSSADSPPSKLSLSSDQLNHCHQALGVFRGKIQNPDSIAHEFTGLQANRMWPSELLLNSTVAMNSVNVEKNRYSDVVPFDKNRIVLNPCKDSSAKGYVNASLIKTSESESISQFIATQGPLPHTMEDFWEMVIQQHCPIIVMLTRLVDNNRTVKCGDYFQDEDGPREFGNISLTTKWIKTTDTSLMLRNLEVNYKETEDQPMSVLHIQYPEWPDHGVPKDTVAVREILKRLYQVPPSLGPIIVHCSAGIGRTGTYCAIHNTIQRILAGDMSALDLAKTVALFRKQRIGMVQTMDQYFFCYNAIVDELEDLTAGTNAGTSS.

The Tyrosine-protein phosphatase domain maps to Ile58–Glu326. Residues Asp234, Cys265–Arg271, and Gln311 each bind substrate. Residue Cys265 is the Phosphocysteine intermediate of the active site.

As to quaternary structure, interacts with MPK6. Interacts with KIN10. In terms of processing, phosphorylated by KIN10. As to expression, expressed in roots, stems and flowers, and at low levels in leaves.

It localises to the cytoplasm. It is found in the cytosol. Its subcellular location is the nucleus. It catalyses the reaction O-phospho-L-tyrosyl-[protein] + H2O = L-tyrosyl-[protein] + phosphate. With respect to regulation, inhibited by hydrogen peroxide. Functionally, protein-tyrosine-phosphatase that dephosphorylates and probably inhibits MPK6 in non-oxidative stress conditions. In association with MKP1, represses salicylic acid (SA) and camalexin biosynthesis, thus modulating defense response. May also repress MPK3. Dephosphorylates and inactivates MPK4 in vitro. The chain is Protein-tyrosine-phosphatase PTP1 (PTP1) from Arabidopsis thaliana (Mouse-ear cress).